The following is a 338-amino-acid chain: GTPase Obg (338 aa).

Residues 1-159 (MKFIDEVTLF…AKLRLELKLM (159 aa)) enclose the Obg domain. The OBG-type G domain maps to 160-331 (ADVGLLGLPN…LLDEIARRLW (172 aa)). Residues 166-173 (GLPNAGKS), 191-195 (FTTIK), 213-216 (DIPG), 283-286 (TKLD), and 312-314 (SSA) contribute to the GTP site. Mg(2+) is bound by residues serine 173 and threonine 193.

It belongs to the TRAFAC class OBG-HflX-like GTPase superfamily. OBG GTPase family. Monomer. Mg(2+) serves as cofactor.

Its subcellular location is the cytoplasm. Functionally, an essential GTPase which binds GTP, GDP and possibly (p)ppGpp with moderate affinity, with high nucleotide exchange rates and a fairly low GTP hydrolysis rate. Plays a role in control of the cell cycle, stress response, ribosome biogenesis and in those bacteria that undergo differentiation, in morphogenesis control. The polypeptide is GTPase Obg (Pelobacter propionicus (strain DSM 2379 / NBRC 103807 / OttBd1)).